Reading from the N-terminus, the 310-residue chain is Glutamyl-Q tRNA(Asp) synthetase (310 aa).

L-glutamate-binding positions include 24–28 (RFAPS) and glutamate 60. The short motif at 27–37 (PSPSGPLHFGS) is the 'HIGH' region element. Positions 116, 118, 130, and 134 each coordinate Zn(2+). Tyrosine 187 and arginine 205 together coordinate L-glutamate. The 'KMSKS' region motif lies at 243-247 (KLSKQ). Lysine 246 lines the ATP pocket.

The protein belongs to the class-I aminoacyl-tRNA synthetase family. GluQ subfamily. It depends on Zn(2+) as a cofactor.

Catalyzes the tRNA-independent activation of glutamate in presence of ATP and the subsequent transfer of glutamate onto a tRNA(Asp). Glutamate is transferred on the 2-amino-5-(4,5-dihydroxy-2-cyclopenten-1-yl) moiety of the queuosine in the wobble position of the QUC anticodon. This is Glutamyl-Q tRNA(Asp) synthetase from Photobacterium profundum (strain SS9).